The sequence spans 706 residues: Polyribonucleotide nucleotidyltransferase (706 aa).

2 residues coordinate Mg(2+): Asp-485 and Asp-491. Residues 552-611 (PRMLKMKIHPDKIREVIGSGGKTINKIIEDTGVKIDIENDGTIFIAAQTQEAGELALSII) enclose the KH domain. Positions 621–689 (GDIFKGKVIK…QQGKVSLSRK (69 aa)) constitute an S1 motif domain.

It belongs to the polyribonucleotide nucleotidyltransferase family. Mg(2+) is required as a cofactor.

Its subcellular location is the cytoplasm. The catalysed reaction is RNA(n+1) + phosphate = RNA(n) + a ribonucleoside 5'-diphosphate. Functionally, involved in mRNA degradation. Catalyzes the phosphorolysis of single-stranded polyribonucleotides processively in the 3'- to 5'-direction. This is Polyribonucleotide nucleotidyltransferase from Alkaliphilus oremlandii (strain OhILAs) (Clostridium oremlandii (strain OhILAs)).